We begin with the raw amino-acid sequence, 389 residues long: Equilibrative nucleotide transporter 8 (389 aa).

The next 10 helical transmembrane spans lie at 19–39 (VAYVIHFLLGAGSLIPWNALI), 57–77 (TFTVAYMSCSVLVLVLMMTWN), 87–107 (NLGFSMFIIAMMISPLIDWVW), 119–139 (LMVGSVVLCGLADGVVGGSLI), 150–170 (MQAIFAGTASSGIIISLLRIA), 187–207 (HSYFIVSSTILLCCFISCNVL), 238–258 (WPASGMLIIYSVTLSIFPGFI), 266–286 (LLQSWYPILLITVYNISDFVG), 331–351 (VVVLTFMLGLTNGYLTSVLMI), and 367–387 (IFMVVFLGLGLVCGSVIGWLW).

It belongs to the SLC29A/ENT transporter (TC 2.A.57) family. Expressed in stems, flowers and siliques.

It is found in the cell membrane. Its function is as follows. May be involved in nucleoside transport. The sequence is that of Equilibrative nucleotide transporter 8 (ETN8) from Arabidopsis thaliana (Mouse-ear cress).